A 344-amino-acid chain; its full sequence is tRNA N6-adenosine threonylcarbamoyltransferase (344 aa).

2 residues coordinate Fe cation: His-110 and His-114. Substrate is bound by residues 132–136, Asp-166, Gly-179, Asp-183, and Asn-278; that span reads LVSGG. Asp-306 lines the Fe cation pocket.

Belongs to the KAE1 / TsaD family. Requires Fe(2+) as cofactor.

The protein localises to the cytoplasm. The catalysed reaction is L-threonylcarbamoyladenylate + adenosine(37) in tRNA = N(6)-L-threonylcarbamoyladenosine(37) in tRNA + AMP + H(+). Required for the formation of a threonylcarbamoyl group on adenosine at position 37 (t(6)A37) in tRNAs that read codons beginning with adenine. Is involved in the transfer of the threonylcarbamoyl moiety of threonylcarbamoyl-AMP (TC-AMP) to the N6 group of A37, together with TsaE and TsaB. TsaD likely plays a direct catalytic role in this reaction. The protein is tRNA N6-adenosine threonylcarbamoyltransferase of Nocardia farcinica (strain IFM 10152).